The chain runs to 299 residues: Protoheme IX farnesyltransferase (299 aa).

The next 9 helical transmembrane spans lie at 26 to 46 (VNALIVFCAVIGMFLAVPDGL), 53 to 73 (FAATVGIACVAGAAAAMNCLI), 94 to 114 (LHSVEVLVFAGVLGGFGLSVL), 121 to 141 (LTMWLTLATFVGYAVIYTLLL), 149 to 169 (IVIGGASGAMPPVLGWAAVSG), 175 to 195 (ALLLFLIIFAWTPPHFWSLAL), 217 to 239 (YTRLSVLLYTCALFGVTLLPFAI), 243 to 265 (GWIYLVAAVTLGLRFVHYAWRLL), and 277 to 297 (FRFSIVYLSLLFAALLADHYL).

The protein belongs to the UbiA prenyltransferase family. Protoheme IX farnesyltransferase subfamily.

Its subcellular location is the cell inner membrane. It catalyses the reaction heme b + (2E,6E)-farnesyl diphosphate + H2O = Fe(II)-heme o + diphosphate. The protein operates within porphyrin-containing compound metabolism; heme O biosynthesis; heme O from protoheme: step 1/1. In terms of biological role, converts heme B (protoheme IX) to heme O by substitution of the vinyl group on carbon 2 of heme B porphyrin ring with a hydroxyethyl farnesyl side group. The polypeptide is Protoheme IX farnesyltransferase (Azoarcus sp. (strain BH72)).